Here is a 479-residue protein sequence, read N- to C-terminus: Ribulose bisphosphate carboxylase large chain (479 aa).

A propeptide spanning residues 1-2 is cleaved from the precursor; sequence MS. Pro-3 is subject to N-acetylproline. Substrate contacts are provided by residues Thr-65, Asn-123, 173 to 177, and 201 to 204; these read TIKPK and KDDE. Residue Lys-175 is the Proton acceptor of the active site. Residues Lys-201, Asp-203, and Glu-204 each contribute to the Mg(2+) site. N6-carboxylysine is present on Lys-201. Ser-208 carries the post-translational modification Phosphoserine. Catalysis depends on His-294, which acts as the Proton acceptor. Residues 294–295 and His-327 contribute to the substrate site; that span reads HR. Thr-330 carries the post-translational modification Phosphothreonine. Substrate is bound by residues Lys-334 and 379-381; that span reads SGG.

Belongs to the RuBisCO large chain family. Type I subfamily. Heterohexadecamer of 8 large chains and 8 small chains; disulfide-linked. The disulfide link is formed within the large subunit homodimers. Interacts with RBCX1 and RBCX1. An intermediate complex made of eight RbcL subunits interacts with the chaperone BSD2. Mg(2+) serves as cofactor. In terms of processing, the disulfide bond which can form in the large chain dimeric partners within the hexadecamer appears to be associated with oxidative stress and protein turnover.

It localises to the plastid. The protein localises to the chloroplast. It catalyses the reaction 2 (2R)-3-phosphoglycerate + 2 H(+) = D-ribulose 1,5-bisphosphate + CO2 + H2O. It carries out the reaction D-ribulose 1,5-bisphosphate + O2 = 2-phosphoglycolate + (2R)-3-phosphoglycerate + 2 H(+). RuBisCO catalyzes two reactions: the carboxylation of D-ribulose 1,5-bisphosphate, the primary event in carbon dioxide fixation, as well as the oxidative fragmentation of the pentose substrate in the photorespiration process. Both reactions occur simultaneously and in competition at the same active site. Binds to abscisic acid (ABA). The polypeptide is Ribulose bisphosphate carboxylase large chain (Arabidopsis thaliana (Mouse-ear cress)).